The primary structure comprises 414 residues: WW domain-containing oxidoreductase (414 aa).

The disordered stretch occupies residues 1–23 (MAALRYAGLDDTDSEDELPPGWE). Residue Thr-12 is modified to Phosphothreonine. The residue at position 14 (Ser-14) is a Phosphoserine. A WW 1 domain is found at 16–49 (DELPPGWEERTTKDGWVYYANHTEEKTQWEHPKT). Tyr-33 carries the post-translational modification Phosphotyrosine. Positions 50-55 (GKRKRV) match the Nuclear localization signal motif. The WW 2 domain maps to 57–90 (GDLPYGWEQETDENGQVFFVDHINKRTTYLDPRL). The tract at residues 125–414 (KVVVVTGANS…IQERLGSQSG (290 aa)) is interaction with MAPT. An NADP(+)-binding site is contributed by 131 to 137 (GANSGIG). The tract at residues 209 to 273 (CNAATFALPW…RFTDINDSLG (65 aa)) is mediates targeting to the mitochondria. Ser-260 is a substrate binding site. Tyr-287 carries the phosphotyrosine; by TNK2 modification. The Proton acceptor role is filled by Tyr-293.

Belongs to the short-chain dehydrogenases/reductases (SDR) family. In terms of assembly, interacts with TP53, p73/TP73 and MAPK8. Interacts with MAPT/TAU, RUNX2 and HYAL2. Forms a ternary complex with TP53 and MDM2. Interacts with ERBB4, LITAF and WBP1. Interacts with DVL1, DVL2 and DVL3. May interact with FAM189B and SCOTIN. Interacts with TNK2. Interacts with TMEM207. Interacts (via WW domain) with VOPP1. Phosphorylated upon genotoxic stress. Phosphorylation of Tyr-33 regulates interaction with TP53, TP73 and MAPK8. May also regulate proapoptotic activity. Phosphorylation by TNK2 is associated with polyubiquitination and degradation. In terms of processing, ubiquitinated when phosphorylated by TNK2, leading to its degradation. As to expression, widely expressed. Strongly expressed in testis, prostate, and ovary. Overexpressed in cancer cell lines. Isoform 5 and isoform 6 may only be expressed in tumor cell lines.

The protein resides in the cytoplasm. Its subcellular location is the nucleus. It is found in the mitochondrion. It localises to the golgi apparatus. The protein localises to the lysosome. Its function is as follows. Putative oxidoreductase. Acts as a tumor suppressor and plays a role in apoptosis. Required for normal bone development. May function synergistically with p53/TP53 to control genotoxic stress-induced cell death. Plays a role in TGFB1 signaling and TGFB1-mediated cell death. May also play a role in tumor necrosis factor (TNF)-mediated cell death. Inhibits Wnt signaling, probably by sequestering DVL2 in the cytoplasm. This chain is WW domain-containing oxidoreductase (WWOX), found in Homo sapiens (Human).